Here is a 141-residue protein sequence, read N- to C-terminus: Large ribosomal subunit protein uL16 (141 aa).

The protein belongs to the universal ribosomal protein uL16 family. As to quaternary structure, part of the 50S ribosomal subunit.

Its function is as follows. Binds 23S rRNA and is also seen to make contacts with the A and possibly P site tRNAs. In Nostoc punctiforme (strain ATCC 29133 / PCC 73102), this protein is Large ribosomal subunit protein uL16.